We begin with the raw amino-acid sequence, 166 residues long: Large ribosomal subunit protein uL10 (166 aa).

This sequence belongs to the universal ribosomal protein uL10 family. Part of the ribosomal stalk of the 50S ribosomal subunit. The N-terminus interacts with L11 and the large rRNA to form the base of the stalk. The C-terminus forms an elongated spine to which L12 dimers bind in a sequential fashion forming a multimeric L10(L12)X complex.

Functionally, forms part of the ribosomal stalk, playing a central role in the interaction of the ribosome with GTP-bound translation factors. The sequence is that of Large ribosomal subunit protein uL10 from Streptococcus pneumoniae (strain 70585).